The sequence spans 265 residues: Dehydrin COR47 (265 aa).

Residues 1-14 (MAEEYKNNVPEHET) show a composition bias toward basic and acidic residues. The tract at residues 1–265 (MAEEYKNNVP…EVKKEKESDD (265 aa)) is disordered. A2 is subject to N-acetylalanine. A compositionally biased stretch (polar residues) spans 16–28 (TVATEESPATTTE). Positions 29–47 (VTDRGLFDFLGKKEEEVKP) are enriched in basic and acidic residues. Residue S64 is modified to Phosphoserine. Over residues 69–79 (AAEHEEVKENK) the composition is skewed to basic and acidic residues. Residue T90 is modified to Phosphothreonine. 2 stretches are compositionally biased toward basic and acidic residues: residues 96-105 (NKPSVIEKLH) and 129-156 (IVEG…KTAE). Residues 133-153 (EEDKKGLVEKIKEKLPGHHDK) form repeat 1. The interval 133–251 (EEDKKGLVEK…KEKLPGYHAK (119 aa)) is 3 X 21 AA repeats, Lys-rich. Low complexity predominate over residues 160–172 (PVSTTIPVPVSES). 2 stretches are compositionally biased toward basic and acidic residues: residues 173 to 204 (VVEH…KAED) and 227 to 265 (PVEH…ESDD). Repeat copies occupy residues 180 to 200 (EEEK…HHDE) and 231 to 251 (PEEK…YHAK).

The protein belongs to the plant dehydrin family.

This chain is Dehydrin COR47 (COR47), found in Arabidopsis thaliana (Mouse-ear cress).